A 440-amino-acid polypeptide reads, in one-letter code: MEQRGQNAPAASGARKRHGPGPREARGARPGPRVPKTLVLVVAAVLLLVSAESALITQQDLAPQQRAAPQQKRSSPSEGLCPPGHHISEDGRDCISCKYGQDYSTHWNDLLFCLRCTRCDSGEVELSPCTTTRNTVCQCEEGTFREEDSPEMCRKCRTGCPRGMVKVGDCTPWSDIECVHKESGTKHSGEVPAVEETVTSSPGTPASPCSLSGIIIGVTVAAVVLIVAVFVCKSLLWKKVLPYLKGICSGGGGDPERVDRSSQRPGAEDNVLNEIVSILQPTQVPEQEMEVQEPAEPTGVNMLSPGESEHLLEPAEAERSQRRRLLVPANEGDPTETLRQCFDDFADLVPFDSWEPLMRKLGLMDNEIKVAKAEAAGHRDTLYTMLIKWVNKTGRDASVHTLLDALETLGERLAKQKIEDHLLSSGKFMYLEGNADSAMS.

Disordered regions lie at residues 1–32 (MEQRGQNAPAASGARKRHGPGPREARGARPGP) and 60–84 (DLAPQQRAAPQQKRSSPSEGLCPPG). Residues 1 to 55 (MEQRGQNAPAASGARKRHGPGPREARGARPGPRVPKTLVLVVAAVLLLVSAESAL) form the signal peptide. Topologically, residues 56 to 210 (ITQQDLAPQQ…SPGTPASPCS (155 aa)) are extracellular. TNFR-Cys repeat units lie at residues 57–94 (TQQDLAPQQRAAPQQKRSSPSEGLCPPGHHISEDGRDC), 97–137 (CKYG…NTVC), and 138–178 (QCEE…DIEC). A compositionally biased stretch (low complexity) spans 60–71 (DLAPQQRAAPQQ). Intrachain disulfides connect Cys-81–Cys-94, Cys-97–Cys-113, Cys-116–Cys-129, Cys-119–Cys-137, Cys-139–Cys-153, Cys-156–Cys-170, and Cys-160–Cys-178. One copy of the TAPE repeat lies at 192–206 (PAVEETVTSSPGTPA). The helical transmembrane segment at 211-231 (LSGIIIGVTVAAVVLIVAVFV) threads the bilayer. Residues 232–440 (CKSLLWKKVL…LEGNADSAMS (209 aa)) are Cytoplasmic-facing. Residues 339 to 422 (RQCFDDFADL…LAKQKIEDHL (84 aa)) enclose the Death domain.

In terms of assembly, monomer. Can interact with TRADD and RIPK1. Interacts with HCMV protein UL141; this interaction prevents TNFRSF10B cell surface expression. Two TNFRSF10B monomers interact with a UL141 homodimer. Three TNFRSF10B molecules interact with TNFSF10 homotrimer. In the absence of stimulation, interacts with BIRC2, DDX3X and GSK3B. The interaction with BIRC2 and DDX3X is further enhanced upon receptor stimulation and accompanied by DDX3X and BIRC2 cleavage. In terms of processing, (Microbial infection) Glycosylated on Arg residue by S.typhimurium protein Ssek3. As to expression, widely expressed in adult and fetal tissues; very highly expressed in tumor cell lines such as HeLaS3, K-562, HL-60, SW480, A-549 and G-361; highly expressed in heart, peripheral blood lymphocytes, liver, pancreas, spleen, thymus, prostate, ovary, uterus, placenta, testis, esophagus, stomach and throughout the intestinal tract; not detectable in brain.

It localises to the membrane. In terms of biological role, receptor for the cytotoxic ligand TNFSF10/TRAIL. The adapter molecule FADD recruits caspase-8 to the activated receptor. The resulting death-inducing signaling complex (DISC) performs caspase-8 proteolytic activation which initiates the subsequent cascade of caspases (aspartate-specific cysteine proteases) mediating apoptosis. Promotes the activation of NF-kappa-B. Essential for ER stress-induced apoptosis. The protein is Tumor necrosis factor receptor superfamily member 10B (TNFRSF10B) of Homo sapiens (Human).